Here is a 360-residue protein sequence, read N- to C-terminus: Alanine racemase (360 aa).

Lysine 36 acts as the Proton acceptor; specific for D-alanine in catalysis. Lysine 36 carries the post-translational modification N6-(pyridoxal phosphate)lysine. Arginine 132 serves as a coordination point for substrate. Tyrosine 256 acts as the Proton acceptor; specific for L-alanine in catalysis. Methionine 304 serves as a coordination point for substrate.

It belongs to the alanine racemase family. Requires pyridoxal 5'-phosphate as cofactor.

The catalysed reaction is L-alanine = D-alanine. It functions in the pathway amino-acid biosynthesis; D-alanine biosynthesis; D-alanine from L-alanine: step 1/1. In terms of biological role, catalyzes the interconversion of L-alanine and D-alanine. May also act on other amino acids. The chain is Alanine racemase (alr) from Pasteurella multocida (strain Pm70).